The primary structure comprises 567 residues: UPF0313 protein CTN_0332 (567 aa).

The Radical SAM core domain maps to 288-560 (KAIETVKFSI…NKMKENVLFK (273 aa)). The [4Fe-4S] cluster site is built by cysteine 303, cysteine 307, and cysteine 310.

Belongs to the UPF0313 family. Requires [4Fe-4S] cluster as cofactor.

The chain is UPF0313 protein CTN_0332 from Thermotoga neapolitana (strain ATCC 49049 / DSM 4359 / NBRC 107923 / NS-E).